The chain runs to 273 residues: Ribosomal RNA small subunit methyltransferase A (273 aa).

Positions 18, 20, 45, 66, 91, and 113 each coordinate S-adenosyl-L-methionine.

It belongs to the class I-like SAM-binding methyltransferase superfamily. rRNA adenine N(6)-methyltransferase family. RsmA subfamily.

It localises to the cytoplasm. It catalyses the reaction adenosine(1518)/adenosine(1519) in 16S rRNA + 4 S-adenosyl-L-methionine = N(6)-dimethyladenosine(1518)/N(6)-dimethyladenosine(1519) in 16S rRNA + 4 S-adenosyl-L-homocysteine + 4 H(+). Functionally, specifically dimethylates two adjacent adenosines (A1518 and A1519) in the loop of a conserved hairpin near the 3'-end of 16S rRNA in the 30S particle. May play a critical role in biogenesis of 30S subunits. The protein is Ribosomal RNA small subunit methyltransferase A of Escherichia coli O1:K1 / APEC.